Here is a 143-residue protein sequence, read N- to C-terminus: Large ribosomal subunit protein uL13 (143 aa).

It belongs to the universal ribosomal protein uL13 family. In terms of assembly, part of the 50S ribosomal subunit.

Functionally, this protein is one of the early assembly proteins of the 50S ribosomal subunit, although it is not seen to bind rRNA by itself. It is important during the early stages of 50S assembly. This chain is Large ribosomal subunit protein uL13, found in Alkaliphilus oremlandii (strain OhILAs) (Clostridium oremlandii (strain OhILAs)).